The following is a 220-amino-acid chain: MSAPAQNNAEVPTFKLVLVGDGGTGKTTFVKRHLTGEFEKKYIATIGVEVHPLSFYTNFGEIKFDVWDTAGQEKFGGLRDGYYINAQCAIIMFDVTSRITYKNVPNWHRDLVRVCENIPIVLCGNKVDVKERKVKAKTITFHRKKNLQYYDISAKSNYNFEKPFLWLARKLAGNPQLEFVASPALAPPEVQVDEQLMHQYQQEMDQATALPLPDEDDADL.

Residue serine 2 is modified to N-acetylserine. Serine 2 is modified (phosphoserine). The region spanning 10 to 174 (EVPTFKLVLV…LWLARKLAGN (165 aa)) is the Small GTPase Ran-type domain. GTP is bound at residue 21 to 28 (DGGTGKTT). The tract at residues 40 to 48 (KKYIATIGV) is switch-I. GTP contacts are provided by residues glycine 71, 125–128 (NKVD), and 153–155 (SAK). The switch-II stretch occupies residues 71–87 (GQEKFGGLRDGYYINAQ).

This sequence belongs to the small GTPase superfamily. Ran family. Found in a nuclear export complex with RanGTP, exportin and pre-miRNA.

It is found in the nucleus. GTP-binding protein involved in nucleocytoplasmic transport. Required for the import of protein into the nucleus and also for RNA export. Not essential for cell viability. The polypeptide is GTP-binding nuclear protein GSP2/CNR2 (GSP2) (Saccharomyces cerevisiae (strain ATCC 204508 / S288c) (Baker's yeast)).